Consider the following 310-residue polypeptide: Fe-S cluster assembly protein dre2 (310 aa).

Residues 1 to 130 (MSGRTLLLSP…KPDIEDMRAV (130 aa)) form an N-terminal SAM-like domain region. Residues 131-203 (PLRLGRKKHD…EDLLDGSELA (73 aa)) form a linker region. The [2Fe-2S] cluster site is built by Cys212, Cys223, Cys226, and Cys228. The interval 212-228 (CRPKAGRRRRACKDCTC) is fe-S binding site A. 4 residues coordinate [4Fe-4S] cluster: Cys273, Cys276, Cys284, and Cys287. Short sequence motifs (cx2C motif) lie at residues 273-276 (CGNC) and 284-287 (CEGC). The fe-S binding site B stretch occupies residues 273–287 (CGNCSLGDAFRCEGC).

This sequence belongs to the anamorsin family. In terms of assembly, monomer. Interacts with tah18. Interacts with mia40. [2Fe-2S] cluster serves as cofactor. The cofactor is [4Fe-4S] cluster.

Its subcellular location is the cytoplasm. It is found in the mitochondrion intermembrane space. Functionally, component of the cytosolic iron-sulfur (Fe-S) protein assembly (CIA) machinery required for the maturation of extramitochondrial Fe-S proteins. Part of an electron transfer chain functioning in an early step of cytosolic Fe-S biogenesis, facilitating the de novo assembly of a [4Fe-4S] cluster on the scaffold complex cfd1-nbp35. Electrons are transferred to dre2 from NADPH via the FAD- and FMN-containing protein tah18. Tah18-dre2 are also required for the assembly of the diferric tyrosyl radical cofactor of ribonucleotide reductase (RNR), probably by providing electrons for reduction during radical cofactor maturation in the catalytic small subunit rnr2. This chain is Fe-S cluster assembly protein dre2, found in Aspergillus clavatus (strain ATCC 1007 / CBS 513.65 / DSM 816 / NCTC 3887 / NRRL 1 / QM 1276 / 107).